Consider the following 186-residue polypeptide: ADP compounds hydrolase NudE (186 aa).

Glu40 is a substrate binding site. Positions 45–172 (TNREAVMIVP…DFNEARNVSA (128 aa)) constitute a Nudix hydrolase domain. The Nudix box motif lies at 80–101 (GLIDPGESVYEAANRELKEEVG). Glu95 and Glu99 together coordinate a divalent metal cation. Ser118 contacts substrate.

It belongs to the Nudix hydrolase family. In terms of assembly, homodimer. The cofactor is Mg(2+).

It catalyses the reaction ADP-D-ribose + H2O = D-ribose 5-phosphate + AMP + 2 H(+). Its function is as follows. Active on adenosine(5')triphospho(5')adenosine (Ap3A), ADP-ribose, NADH, adenosine(5')diphospho(5')adenosine (Ap2A). The sequence is that of ADP compounds hydrolase NudE (nudE) from Escherichia coli (strain K12).